The primary structure comprises 210 residues: Methylthioribulose-1-phosphate dehydratase (210 aa).

The Zn(2+) site is built by H97 and H99.

It belongs to the aldolase class II family. MtnB subfamily. Homotetramer. Zn(2+) serves as cofactor.

The catalysed reaction is 5-(methylsulfanyl)-D-ribulose 1-phosphate = 5-methylsulfanyl-2,3-dioxopentyl phosphate + H2O. It participates in amino-acid biosynthesis; L-methionine biosynthesis via salvage pathway; L-methionine from S-methyl-5-thio-alpha-D-ribose 1-phosphate: step 2/6. Its function is as follows. Catalyzes the dehydration of methylthioribulose-1-phosphate (MTRu-1-P) into 2,3-diketo-5-methylthiopentyl-1-phosphate (DK-MTP-1-P). This Geobacillus kaustophilus (strain HTA426) protein is Methylthioribulose-1-phosphate dehydratase.